The primary structure comprises 296 residues: Ribosomal RNA small subunit methyltransferase A (296 aa).

A compositionally biased stretch (basic and acidic residues) spans 1 to 11 (MERSHVGRDCG). Positions 1–24 (MERSHVGRDCGSRSSPRAFSVPTS) are disordered. A compositionally biased stretch (polar residues) spans 12 to 24 (SRSSPRAFSVPTS). 6 residues coordinate S-adenosyl-L-methionine: asparagine 43, leucine 45, glycine 70, glutamate 91, aspartate 113, and asparagine 135.

This sequence belongs to the class I-like SAM-binding methyltransferase superfamily. rRNA adenine N(6)-methyltransferase family. RsmA subfamily.

Its subcellular location is the cytoplasm. It catalyses the reaction adenosine(1518)/adenosine(1519) in 16S rRNA + 4 S-adenosyl-L-methionine = N(6)-dimethyladenosine(1518)/N(6)-dimethyladenosine(1519) in 16S rRNA + 4 S-adenosyl-L-homocysteine + 4 H(+). Functionally, specifically dimethylates two adjacent adenosines (A1518 and A1519) in the loop of a conserved hairpin near the 3'-end of 16S rRNA in the 30S particle. May play a critical role in biogenesis of 30S subunits. The chain is Ribosomal RNA small subunit methyltransferase A from Salinibacter ruber (strain DSM 13855 / M31).